Here is a 186-residue protein sequence, read N- to C-terminus: uncharacterized protein (186 aa).

The N-terminal stretch at 1–18 (MKKFFFAAALVVSGLLVG) is a signal peptide. Cys-19 carries the N-palmitoyl cysteine lipid modification. Residue Cys-19 is the site of S-diacylglycerol cysteine attachment.

The protein resides in the cell membrane. This is an uncharacterized protein from Salmonella typhimurium (strain LT2 / SGSC1412 / ATCC 700720).